A 151-amino-acid polypeptide reads, in one-letter code: 3-hydroxyacyl-[acyl-carrier-protein] dehydratase FabZ (151 aa).

His-49 is an active-site residue.

It belongs to the thioester dehydratase family. FabZ subfamily.

The protein resides in the cytoplasm. It catalyses the reaction a (3R)-hydroxyacyl-[ACP] = a (2E)-enoyl-[ACP] + H2O. Its function is as follows. Involved in unsaturated fatty acids biosynthesis. Catalyzes the dehydration of short chain beta-hydroxyacyl-ACPs and long chain saturated and unsaturated beta-hydroxyacyl-ACPs. The polypeptide is 3-hydroxyacyl-[acyl-carrier-protein] dehydratase FabZ (Wolinella succinogenes (strain ATCC 29543 / DSM 1740 / CCUG 13145 / JCM 31913 / LMG 7466 / NCTC 11488 / FDC 602W) (Vibrio succinogenes)).